Reading from the N-terminus, the 253-residue chain is Discoidin-1 subunit A (253 aa).

Ser2 is subject to N-acetylserine. One can recognise an F5/8 type C domain in the interval 2–152; the sequence is STQGLVQLLA…ISLRCEFYTQ (151 aa). The Cell attachment site signature appears at 79–81; that stretch reads RGD.

As to quaternary structure, tetramer of four different chains (A to D). As to expression, stalk cells.

The protein localises to the cytoplasm. In terms of biological role, galactose- and N-acetylgalactosamine-binding lectin. May play a role in cell-substratum adhesion rather than in cell-cell adhesion. May be necessary for the maintenance of normal elongate morphology during aggregation. In Dictyostelium discoideum (Social amoeba), this protein is Discoidin-1 subunit A (dscA-1).